The primary structure comprises 82 residues: Cytochrome b559 subunit alpha (82 aa).

The chain crosses the membrane as a helical span at residues 22–36; that stretch reads VIHSITIPALFIAGW. Histidine 24 is a binding site for heme.

It belongs to the PsbE/PsbF family. As to quaternary structure, heterodimer of an alpha subunit and a beta subunit. PSII is composed of 1 copy each of membrane proteins PsbA, PsbB, PsbC, PsbD, PsbE, PsbF, PsbH, PsbI, PsbJ, PsbK, PsbL, PsbM, PsbT, PsbX, PsbY, PsbZ, Psb30/Ycf12, peripheral proteins PsbO, CyanoQ (PsbQ), PsbU, PsbV and a large number of cofactors. It forms dimeric complexes. The cofactor is heme b.

It localises to the cellular thylakoid membrane. Functionally, this b-type cytochrome is tightly associated with the reaction center of photosystem II (PSII). PSII is a light-driven water:plastoquinone oxidoreductase that uses light energy to abstract electrons from H(2)O, generating O(2) and a proton gradient subsequently used for ATP formation. It consists of a core antenna complex that captures photons, and an electron transfer chain that converts photonic excitation into a charge separation. In Trichodesmium erythraeum (strain IMS101), this protein is Cytochrome b559 subunit alpha.